The following is a 61-amino-acid chain: Japonicin-1CDYa (61 aa).

Positions 1 to 22 (MFTLKKSLLLLFFLGVINVSLC) are cleaved as a signal peptide. Residues 23–45 (EEERDADEEERRDDPEERDVEVE) constitute a propeptide that is removed on maturation. Cys55 and Cys61 are joined by a disulfide.

Belongs to the frog skin active peptide (FSAP) family. Brevinin subfamily. As to expression, expressed by the skin glands.

The protein localises to the secreted. In terms of biological role, antimicrobial peptide. Has low activity against the Gram-positive bacterium S.aureus (MIC&gt;100 uM) and the Gram-negative bacterium E.coli (MIC=25 uM). Lacks hemolytic activity against human erythrocytes. This is Japonicin-1CDYa from Rana dybowskii (Dybovsky's frog).